We begin with the raw amino-acid sequence, 556 residues long: MSVSAFNRRWAAVILEALTRHGVRHVCIAPGSRSTPLTLAAAENSAFIHHTHFDERGLGHLALGLAKVSKQPVAVIVTSGTAVANLYPALIEAGLTGEKLILLTADRPPELIDCGANQAIRQAGMFASHPSQTLSLPRPTQDISARWLVSTLDNVLATLHAGAVHINCPFAEPLYGDMDDTGLAWQQSLGDWWQDDKPWLREARRLESDKQRDWFFWRQKRGVVVAGRMSAEEGKKVALWAQTLGWPLIGDVLSQTGQPLPCADLWLGNAKAVTELQQAQIVVQLGSSLTGKRLLQWQAACEPEEYWIIDNIEGRLDPAHHRGRRLVAKIADWLELHPAEKRHPWCVDIPRLAEQAWQAVAARRDMFGEAQLAHRIRDYLPEQGQLFVGNSLVVRLIDALSQLPAGYPVYSNRGASGIDGLISTAAGVQRASAKSTLAIVGDLSALYDLNALALLRQVSAPFVLIVVNNNGGQIFSLLPTPQSERERFYLMPQNVHFEHAAAMFNLKYHRPQSWDELDAALAGAWRTPTTTVIELVVNDTDGAQTLQQLLAQVSHL.

It belongs to the TPP enzyme family. MenD subfamily. Homodimer. It depends on Mg(2+) as a cofactor. Requires Mn(2+) as cofactor. Thiamine diphosphate serves as cofactor.

The enzyme catalyses isochorismate + 2-oxoglutarate + H(+) = 5-enolpyruvoyl-6-hydroxy-2-succinyl-cyclohex-3-ene-1-carboxylate + CO2. Its pathway is quinol/quinone metabolism; 1,4-dihydroxy-2-naphthoate biosynthesis; 1,4-dihydroxy-2-naphthoate from chorismate: step 2/7. It participates in quinol/quinone metabolism; menaquinone biosynthesis. In terms of biological role, catalyzes the thiamine diphosphate-dependent decarboxylation of 2-oxoglutarate and the subsequent addition of the resulting succinic semialdehyde-thiamine pyrophosphate anion to isochorismate to yield 2-succinyl-5-enolpyruvyl-6-hydroxy-3-cyclohexene-1-carboxylate (SEPHCHC). In Citrobacter koseri (strain ATCC BAA-895 / CDC 4225-83 / SGSC4696), this protein is 2-succinyl-5-enolpyruvyl-6-hydroxy-3-cyclohexene-1-carboxylate synthase.